The sequence spans 198 residues: uncharacterized protein (198 aa).

The C4-type zinc finger occupies 9–43; it reads CPVCGGKGTFVITSHQIDIPYFGPVLETTMICEKC.

This sequence belongs to the ZPR1 family.

This is an uncharacterized protein from Methanocaldococcus jannaschii (strain ATCC 43067 / DSM 2661 / JAL-1 / JCM 10045 / NBRC 100440) (Methanococcus jannaschii).